Here is a 237-residue protein sequence, read N- to C-terminus: Uridylate kinase (237 aa).

Position 11–14 (11–14) interacts with ATP; the sequence is KLSG. Residue glycine 53 coordinates UMP. Positions 54 and 58 each coordinate ATP. Residues aspartate 73 and 134–141 each bind UMP; that span reads TGNPFFTT. ATP contacts are provided by threonine 161, tyrosine 167, and aspartate 170.

This sequence belongs to the UMP kinase family. As to quaternary structure, homohexamer.

Its subcellular location is the cytoplasm. It carries out the reaction UMP + ATP = UDP + ADP. The protein operates within pyrimidine metabolism; CTP biosynthesis via de novo pathway; UDP from UMP (UMPK route): step 1/1. Its activity is regulated as follows. Inhibited by UTP. In terms of biological role, catalyzes the reversible phosphorylation of UMP to UDP. The protein is Uridylate kinase of Burkholderia cenocepacia (strain HI2424).